The following is a 380-amino-acid chain: Cytochrome b (380 aa).

Helical transmembrane passes span 34–54 (FGSL…LLAT), 78–99 (WLIR…YLHI), 114–134 (WNTG…GYVL), and 179–199 (FFAL…IHLT). Positions 84 and 98 each coordinate heme b. Heme b-binding residues include H183 and H197. H202 contacts a ubiquinone. Helical transmembrane passes span 227–247 (LKDT…ALFS), 289–309 (LGGV…PLLH), 321–341 (FSQF…WVGS), and 348–368 (FIII…ILLP).

Belongs to the cytochrome b family. The cytochrome bc1 complex contains 11 subunits: 3 respiratory subunits (MT-CYB, CYC1 and UQCRFS1), 2 core proteins (UQCRC1 and UQCRC2) and 6 low-molecular weight proteins (UQCRH/QCR6, UQCRB/QCR7, UQCRQ/QCR8, UQCR10/QCR9, UQCR11/QCR10 and a cleavage product of UQCRFS1). This cytochrome bc1 complex then forms a dimer. Requires heme b as cofactor.

The protein resides in the mitochondrion inner membrane. Component of the ubiquinol-cytochrome c reductase complex (complex III or cytochrome b-c1 complex) that is part of the mitochondrial respiratory chain. The b-c1 complex mediates electron transfer from ubiquinol to cytochrome c. Contributes to the generation of a proton gradient across the mitochondrial membrane that is then used for ATP synthesis. In Garrodia nereis (Grey-backed storm-petrel), this protein is Cytochrome b (MT-CYB).